A 301-amino-acid polypeptide reads, in one-letter code: NDP-polyphosphate phosphotransferase 3 (301 aa).

A compositionally biased stretch (basic and acidic residues) spans 1-12 (MNRNGSTKDPRR). The segment at 1-21 (MNRNGSTKDPRRMTGAATGEI) is disordered.

The protein belongs to the polyphosphate kinase 2 (PPK2) family. Class I subfamily. Mg(2+) serves as cofactor.

It catalyses the reaction [phosphate](n) + ATP = [phosphate](n+1) + ADP. The catalysed reaction is [phosphate](n) + CTP = [phosphate](n+1) + CDP. The enzyme catalyses [phosphate](n) + GTP = [phosphate](n+1) + GDP. It carries out the reaction [phosphate](n) + UTP = [phosphate](n+1) + UDP. Uses inorganic polyphosphate (polyP) as a donor to convert NDP to NTP. PolyP hydrolysis is slightly faster with UDP, but it can also use ADP, GDP and CDP. This is NDP-polyphosphate phosphotransferase 3 from Ruegeria pomeroyi (strain ATCC 700808 / DSM 15171 / DSS-3) (Silicibacter pomeroyi).